We begin with the raw amino-acid sequence, 119 residues long: Large ribosomal subunit protein uL18 (119 aa).

The protein belongs to the universal ribosomal protein uL18 family. As to quaternary structure, part of the 50S ribosomal subunit; part of the 5S rRNA/L5/L18/L25 subcomplex. Contacts the 5S and 23S rRNAs.

This is one of the proteins that bind and probably mediate the attachment of the 5S RNA into the large ribosomal subunit, where it forms part of the central protuberance. The polypeptide is Large ribosomal subunit protein uL18 (Sorangium cellulosum (strain So ce56) (Polyangium cellulosum (strain So ce56))).